We begin with the raw amino-acid sequence, 489 residues long: MNTTTPMGMLQQPRPFFMIFFVELWERFGYYGVQGVLAVFFVKQLGFSQEQAFVTFGAFAALVYGLISIGGYVGDHLLGTKRTIVLGALVLAIGYFMTGLSLLKPDLIFIALGTIAVGNGLFKANPASLLSKCYPPKAPRLDGAFTLFYMSINIGSLIALSLAPVIADRFGYSVTYNLCGAGLIIALLVYIACRGMVKDIGSEPDFRPMSFSKLLYVLLGSVVMIFVCAWLMHNVEVANLVLIVLSIVVTIIFFRQAFKLDKTGRNKMFVAFVLMLEAVVFYILYAQMPTSLNFFAINNVHHEILGFSINPVSFQALNPFWVVLASPILAGIYTHLGSKGKDLSMPMKFTLGMFMCSLGFLTAAAAGMWFADAQGLTSPWFIVLVYLFQSLGELFISALGLAMVAALVPQHLMGFILGISFLTQAAAFLLGGYVATFTAVPDNITDPLETLPVYTNVFGKIGLVTLGVAVVMLLMVPWLKRMIAAPESH.

Over 1–27 the chain is Cytoplasmic; that stretch reads MNTTTPMGMLQQPRPFFMIFFVELWER. The chain crosses the membrane as a helical span at residues 28-48; it reads FGYYGVQGVLAVFFVKQLGFS. Residues 49–52 are Periplasmic-facing; that stretch reads QEQA. The helical transmembrane segment at 53 to 73 threads the bilayer; that stretch reads FVTFGAFAALVYGLISIGGYV. The Cytoplasmic segment spans residues 74–82; it reads GDHLLGTKR. The helical transmembrane segment at 83 to 103 threads the bilayer; it reads TIVLGALVLAIGYFMTGLSLL. At 104–106 the chain is on the periplasmic side; that stretch reads KPD. The helical transmembrane segment at 107–127 threads the bilayer; sequence LIFIALGTIAVGNGLFKANPA. At 128-146 the chain is on the cytoplasmic side; it reads SLLSKCYPPKAPRLDGAFT. A helical transmembrane segment spans residues 147–167; sequence LFYMSINIGSLIALSLAPVIA. Residues 168 to 172 lie on the Periplasmic side of the membrane; sequence DRFGY. The helical transmembrane segment at 173-193 threads the bilayer; that stretch reads SVTYNLCGAGLIIALLVYIAC. The Cytoplasmic segment spans residues 194-210; it reads RGMVKDIGSEPDFRPMS. A helical transmembrane segment spans residues 211–231; it reads FSKLLYVLLGSVVMIFVCAWL. At 232–233 the chain is on the periplasmic side; the sequence is MH. Residues 234 to 254 form a helical membrane-spanning segment; the sequence is NVEVANLVLIVLSIVVTIIFF. Residues 255-267 lie on the Cytoplasmic side of the membrane; the sequence is RQAFKLDKTGRNK. Residues 268 to 288 form a helical membrane-spanning segment; it reads MFVAFVLMLEAVVFYILYAQM. Residues 289–311 lie on the Periplasmic side of the membrane; sequence PTSLNFFAINNVHHEILGFSINP. Residues 312–332 form a helical membrane-spanning segment; it reads VSFQALNPFWVVLASPILAGI. Residues 333–350 lie on the Cytoplasmic side of the membrane; that stretch reads YTHLGSKGKDLSMPMKFT. The helical transmembrane segment at 351 to 371 threads the bilayer; the sequence is LGMFMCSLGFLTAAAAGMWFA. Topologically, residues 372–380 are periplasmic; sequence DAQGLTSPW. Residues 381-401 traverse the membrane as a helical segment; that stretch reads FIVLVYLFQSLGELFISALGL. Residues 402 to 411 lie on the Cytoplasmic side of the membrane; it reads AMVAALVPQH. The helical transmembrane segment at 412 to 432 threads the bilayer; the sequence is LMGFILGISFLTQAAAFLLGG. Residues 433–456 lie on the Periplasmic side of the membrane; it reads YVATFTAVPDNITDPLETLPVYTN. A helical membrane pass occupies residues 457–477; that stretch reads VFGKIGLVTLGVAVVMLLMVP. Topologically, residues 478 to 489 are cytoplasmic; that stretch reads WLKRMIAAPESH.

The protein belongs to the major facilitator superfamily. Proton-dependent oligopeptide transporter (POT/PTR) (TC 2.A.17) family. DtpB subfamily.

Its subcellular location is the cell inner membrane. Its function is as follows. Proton-dependent permease that transports di- and tripeptides. The sequence is that of Dipeptide and tripeptide permease B from Shigella dysenteriae serotype 1 (strain Sd197).